Reading from the N-terminus, the 207-residue chain is U1 small nuclear ribonucleoprotein C (207 aa).

The Matrin-type zinc-finger motif lies at 4-36 (YYCDYCDTYLTHDSPSVRKQHNAGYKHKANVRI). Composition is skewed to pro residues over residues 105–115 (PPQGYMPPPGV) and 122–131 (PGAPLPPPPQ). Residues 105–207 (PPQGYMPPPG…PSAESPESNE (103 aa)) are disordered. Over residues 132–144 (NGILRPPGMAPIP) the composition is skewed to low complexity. The segment covering 162 to 183 (GPPPNYNGLPPPPPYHTNPAAP) has biased composition (pro residues). Positions 184–207 (PSGNFNNPNLNNPNPSAESPESNE) are enriched in low complexity.

It belongs to the U1 small nuclear ribonucleoprotein C family. U1 snRNP is composed of the 7 core Sm proteins B/B', D1, D2, D3, E, F and G that assemble in a heptameric protein ring on the Sm site of the small nuclear RNA to form the core snRNP, and at least 3 U1 snRNP-specific proteins U1-70K, U1-A and U1-C. U1-C interacts with U1 snRNA and the 5' splice-site region of the pre-mRNA.

Its subcellular location is the nucleus. Component of the spliceosomal U1 snRNP, which is essential for recognition of the pre-mRNA 5' splice-site and the subsequent assembly of the spliceosome. U1-C is directly involved in initial 5' splice-site recognition for both constitutive and regulated alternative splicing. The interaction with the 5' splice-site seems to precede base-pairing between the pre-mRNA and the U1 snRNA. Stimulates commitment or early (E) complex formation by stabilizing the base pairing of the 5' end of the U1 snRNA and the 5' splice-site region. This chain is U1 small nuclear ribonucleoprotein C, found in Arabidopsis thaliana (Mouse-ear cress).